A 79-amino-acid polypeptide reads, in one-letter code: U-actitoxin-Oulsp1 (79 aa).

A signal peptide spans 1 to 21 (MNTKLVVVFLLSAILFVSVTA). Residues 22–43 (SRPGKDLERDEAYETYDDENKR) constitute a propeptide that is removed on maturation. The region spanning 45 to 79 (CKDVFPAATCRHAKSVGNCSSEKYKRNCAITCGAC) is the ShKT domain. 3 cysteine pairs are disulfide-bonded: C45/C79, C54/C72, and C63/C76. A crucial for binding to potassium channels region spans residues 67–68 (KY).

Belongs to the sea anemone type 1 potassium channel toxin family. Type 1b subfamily. Two similar peptides (OspTx2a-p1 and -p2) are obtained after synthesis and oxidative folding. They may differ by a D-Cys at position 76 (corresponding to OspTx2a-p2). Since C-terminal Cys residues are prone to racemization during solid-phase peptide synthesis, and if the presence of a D-amino acid is correct, it is probable that OspTx2a-p1 (L-Cys-76 form) corresponds to the native peptide.

It localises to the secreted. Functionally, toxin that weakly blocks the two voltage-gated potassium channels on Kv1.2/KCNA2 (IC(50)=1.8-2.5 uM) and Kv1.6/KCNA6 (IC(50)=5.6-6.2 uM). This is U-actitoxin-Oulsp1 from Oulactis sp. (Sea anemone).